The following is a 375-amino-acid chain: 23S rRNA (uracil(747)-C(5))-methyltransferase RlmC (375 aa).

[4Fe-4S] cluster contacts are provided by C3, C11, C14, and C87. S-adenosyl-L-methionine contacts are provided by Q212, F241, E262, and N307. Catalysis depends on C334, which acts as the Nucleophile.

The protein belongs to the class I-like SAM-binding methyltransferase superfamily. RNA M5U methyltransferase family. RlmC subfamily.

It carries out the reaction uridine(747) in 23S rRNA + S-adenosyl-L-methionine = 5-methyluridine(747) in 23S rRNA + S-adenosyl-L-homocysteine + H(+). In terms of biological role, catalyzes the formation of 5-methyl-uridine at position 747 (m5U747) in 23S rRNA. This chain is 23S rRNA (uracil(747)-C(5))-methyltransferase RlmC, found in Xenorhabdus nematophila (strain ATCC 19061 / DSM 3370 / CCUG 14189 / LMG 1036 / NCIMB 9965 / AN6).